A 237-amino-acid chain; its full sequence is tRNA(His) guanylyltransferase (237 aa).

Ala2 is modified (N-acetylalanine). Residues Asp29 and Gly30 each contribute to the Mg(2+) site. Positions 32, 33, 34, 44, and 47 each coordinate GTP. Asp77 provides a ligand contact to Mg(2+).

The protein belongs to the tRNA(His) guanylyltransferase family. As to quaternary structure, homotetramer. The cofactor is Mg(2+).

It carries out the reaction a 5'-end ribonucleotide-tRNA(His) + GTP + ATP + H2O = a 5'-end phospho-guanosine-ribonucleotide-tRNA(His) + AMP + 2 diphosphate + H(+). The catalysed reaction is a 5'-end ribonucleotide-RNA + a ribonucleoside 5'-triphosphate + ATP + H2O = a 5'-end phospho-ribonucleoside-ribonucleotide-RNA + AMP + 2 diphosphate + H(+). In terms of biological role, acts as a tRNA(His) guanylyltransferase that catalyzes 3'-5' addition of a single guanosine residue to the -1 position of tRNA(His), to form a non-Watson-Crick G(-1):A-73 base pair. After addition of G(-1), THG1 removes pyrophosphate from the tRNA 5'-end, generating 5'-monophosphorylated G(-1)-containing tRNA which is important for recognition of tRNA(His) by its cognate histidyl-tRNA synthetase. In addition to the single-G(-1) addition reaction, THG1 polymerizes multiple G residues to the 5'-end of tRNA(His) variants using the 3'-end of the tRNA(His) acceptor stem as a template. The sequence is that of tRNA(His) guanylyltransferase from Saccharomyces cerevisiae (strain ATCC 204508 / S288c) (Baker's yeast).